We begin with the raw amino-acid sequence, 556 residues long: ATP synthase subunit beta-2, mitochondrial (556 aa).

Residues 1 to 20 are compositionally biased toward low complexity; it reads MASRRVLSSLLRSSSGRSAA. The interval 1 to 37 is disordered; that stretch reads MASRRVLSSLLRSSSGRSAAKLVNRNPRLPSPSPARH. The N-terminal 51 residues, 1–51, are a transit peptide targeting the mitochondrion; it reads MASRRVLSSLLRSSSGRSAAKLVNRNPRLPSPSPARHAAPCSYLLGRVAEY. A Phosphoserine modification is found at Ser-59. 231-238 contributes to the ATP binding site; that stretch reads GGAGVGKT.

The protein belongs to the ATPase alpha/beta chains family. In terms of assembly, F-type ATPases have 2 components, CF(1) - the catalytic core - and CF(0) - the membrane proton channel. CF(1) has five subunits: alpha(3), beta(3), gamma(1), delta(1), epsilon(1). CF(0) has three main subunits: a, b and c.

It is found in the mitochondrion. Its subcellular location is the mitochondrion inner membrane. It carries out the reaction ATP + H2O + 4 H(+)(in) = ADP + phosphate + 5 H(+)(out). In terms of biological role, mitochondrial membrane ATP synthase (F(1)F(0) ATP synthase or Complex V) produces ATP from ADP in the presence of a proton gradient across the membrane which is generated by electron transport complexes of the respiratory chain. F-type ATPases consist of two structural domains, F(1) - containing the extramembraneous catalytic core, and F(0) - containing the membrane proton channel, linked together by a central stalk and a peripheral stalk. During catalysis, ATP synthesis in the catalytic domain of F(1) is coupled via a rotary mechanism of the central stalk subunits to proton translocation. Subunits alpha and beta form the catalytic core in F(1). Rotation of the central stalk against the surrounding alpha(3)beta(3) subunits leads to hydrolysis of ATP in three separate catalytic sites on the beta subunits. This is ATP synthase subunit beta-2, mitochondrial from Arabidopsis thaliana (Mouse-ear cress).